The chain runs to 107 residues: UPF0145 protein PC1_1703 (107 aa).

The protein belongs to the UPF0145 family.

The chain is UPF0145 protein PC1_1703 from Pectobacterium carotovorum subsp. carotovorum (strain PC1).